The sequence spans 379 residues: Gonadotropin-releasing hormone II receptor (379 aa).

Residues 1-40 are Extracellular-facing; sequence MSAGNGTPWGSAAGEESWAASGVAVEGSELPTFSAAAKVR. A helical membrane pass occupies residues 41-60; it reads VGVTIVLFVSSAGGNLAVLW. Residues 61-76 are Cytoplasmic-facing; sequence SVTRPQPSQLRPSPVR. The chain crosses the membrane as a helical span at residues 77–96; it reads TLFAHLAAADLLVTFVVMPL. At 97–114 the chain is on the extracellular side; that stretch reads DATWNITVQWLAEDIACR. The N-linked (GlcNAc...) asparagine glycan is linked to N101. C113 and C188 form a disulfide bridge. A helical membrane pass occupies residues 115-136; it reads TLMFLKLMAMYSAAFLPVVIGL. The Cytoplasmic segment spans residues 137–160; sequence DRQAAVLNPLGSRSGVRKLLGAAW. A helical transmembrane segment spans residues 161 to 178; sequence GLSFLLALPQLFLFHTVH. Topologically, residues 179–204 are extracellular; the sequence is RAGPVPFTQCVTKGSFKARWQETTYN. Residues 205-224 traverse the membrane as a helical segment; sequence LFTFRCLFLLPLTAMAICYS. Over 225–278 the chain is Cytoplasmic; the sequence is HIVLSVSSPQTRKGSHAPAGEFALCRSFDNCPRVRLWALRLALLILLTFILCWT. The helical transmembrane segment at 279-297 threads the bilayer; sequence PYYLLGLWYWFSPTMLTEV. The Extracellular segment spans residues 298–303; the sequence is PPSLSH. Residues 304–323 traverse the membrane as a helical segment; that stretch reads ILFLFGLLNAPLDPLLYGAF. Over 324–379 the chain is Cytoplasmic; it reads TLGCQRGHQELSIDSSNEGSGRMLQQEIHALRQQEVQKTVTSRSAGETKDISITSI.

The protein belongs to the G-protein coupled receptor 1 family. In terms of processing, phosphorylated on the C-terminal cytoplasmic tail.

It localises to the cell membrane. Functionally, receptor for gonadotropin releasing hormone II (GnRH II). This receptor mediates its action by association with G proteins that activate a phosphatidylinositol-calcium second messenger system. In Macaca mulatta (Rhesus macaque), this protein is Gonadotropin-releasing hormone II receptor (GNRHR2).